The primary structure comprises 399 residues: MKILYYDCFCGISGDMNLAALIDLGVPKEYLMEELSKVNLNSEYEMKIERSVKLGITGTRVDVKLNESSHGEEEHGHDHYHHHRKLKDIEKIINSSHLSDKVKNISLGMFMKIAEAEAKIHGKSLCEVHFHEVGAIDSIVDLVGAAICIDYLKVDRIIASPVQVGGGFVECSHGIIPVPAPATTEILKNIPISTGIVQFETTTPTGAAILAVNVEEFTSKIDFSIEKIGYGIGHRDLEIPNVLRVYLGEQERSEKVEEQYILETNIDDMNPEFYEYVQERLFEVGALDVFKTPIYMKKGRPGINLSVLISEKGEKDVLDVIFEETTSIGVRKHKVEKIMLNRDFSKVKTEYGDITVKKSYYKGKLVKYKPEYEECKAIAKEKNISIDKIYKVVYRQDLN.

Belongs to the LarC family.

It carries out the reaction Ni(II)-pyridinium-3,5-bisthiocarboxylate mononucleotide = pyridinium-3,5-bisthiocarboxylate mononucleotide + Ni(2+). Functionally, involved in the biosynthesis of a nickel-pincer cofactor ((SCS)Ni(II) pincer complex). Binds Ni(2+), and functions in nickel delivery to pyridinium-3,5-bisthiocarboxylic acid mononucleotide (P2TMN), to form the mature cofactor. Is thus probably required for the activation of nickel-pincer cofactor-dependent enzymes. The sequence is that of Pyridinium-3,5-bisthiocarboxylic acid mononucleotide nickel insertion protein from Clostridium kluyveri (strain ATCC 8527 / DSM 555 / NBRC 12016 / NCIMB 10680 / K1).